The sequence spans 202 residues: Peptide methionine sulfoxide reductase A1 (202 aa).

The interval 1-20 is disordered; the sequence is MNILNKLGIGSSRQTNMDPS. S189 is subject to Phosphoserine.

This sequence belongs to the MsrA Met sulfoxide reductase family.

The protein resides in the cytoplasm. It localises to the cytosol. The enzyme catalyses L-methionyl-[protein] + [thioredoxin]-disulfide + H2O = L-methionyl-(S)-S-oxide-[protein] + [thioredoxin]-dithiol. It carries out the reaction [thioredoxin]-disulfide + L-methionine + H2O = L-methionine (S)-S-oxide + [thioredoxin]-dithiol. In terms of biological role, catalyzes the reduction of methionine sulfoxide (MetSO) to methionine in proteins. Plays a protective role against oxidative stress by restoring activity to proteins that have been inactivated by methionine oxidation. MSRA family specifically reduces the MetSO S-enantiomer. This Arabidopsis thaliana (Mouse-ear cress) protein is Peptide methionine sulfoxide reductase A1 (MSRA1).